The sequence spans 163 residues: Phosphopantetheine adenylyltransferase (163 aa).

Thr11 is a substrate binding site. ATP contacts are provided by residues 11 to 12 (TF) and His19. Lys43, Leu75, and Arg89 together coordinate substrate. Residues 90–92 (GLR), Glu100, and 125–131 (YMFISAT) each bind ATP.

The protein belongs to the bacterial CoaD family. In terms of assembly, homohexamer. The cofactor is Mg(2+).

It is found in the cytoplasm. It carries out the reaction (R)-4'-phosphopantetheine + ATP + H(+) = 3'-dephospho-CoA + diphosphate. It participates in cofactor biosynthesis; coenzyme A biosynthesis; CoA from (R)-pantothenate: step 4/5. In terms of biological role, reversibly transfers an adenylyl group from ATP to 4'-phosphopantetheine, yielding dephospho-CoA (dPCoA) and pyrophosphate. The protein is Phosphopantetheine adenylyltransferase of Aromatoleum aromaticum (strain DSM 19018 / LMG 30748 / EbN1) (Azoarcus sp. (strain EbN1)).